An 832-amino-acid chain; its full sequence is Vacuolar transmembrane transporter penV (832 aa).

The next 2 membrane-spanning stretches (helical) occupy residues 39–59 (LYTQ…AFCI) and 117–137 (FFKF…AIIL). The segment at 152–171 (WDNPPGNKTTSPIDGSEKEK) is disordered. Residue Asn-158 is glycosylated (N-linked (GlcNAc...) asparagine). Residues 178–198 (YLWIYVLFAYVFSGLAIYMLL) form a helical membrane-spanning segment. An N-linked (GlcNAc...) asparagine glycan is attached at Asn-214. The interval 291–322 (NDGNALPLTEQQPRDADDERSGLLSGHDNEHV) is disordered. Basic and acidic residues predominate over residues 302-321 (QPRDADDERSGLLSGHDNEH). The next 9 helical transmembrane spans lie at 434–454 (FVIG…ASLL), 483–503 (GLPT…YEWL), 524–544 (FFFS…ASGF), 560–582 (TIAL…LLIL), 587–608 (LFPF…FLSA), 623–645 (FSYG…YSVF), 650–672 (LICL…QLLY), 687–707 (MICN…IGVL), and 713–733 (ITRS…SYWF). The disordered stretch occupies residues 754–777 (PGGGDISPSPSSTLSPPSGLDRDS). Residues 759 to 771 (ISPSPSSTLSPPS) show a composition bias toward low complexity.

This sequence belongs to the CSC1 (TC 1.A.17) family.

The protein localises to the vacuole membrane. Functionally, vacuolar transmembrane transporter that participates in the first stage of the beta-lactam biosynthesis (the formation of the ACV tripeptide), probably taking part in the supply of amino acids from the vacuolar lumen to the vacuole-anchored ACV synthetase. The sequence is that of Vacuolar transmembrane transporter penV from Penicillium rubens (strain ATCC 28089 / DSM 1075 / NRRL 1951 / Wisconsin 54-1255) (Penicillium chrysogenum).